We begin with the raw amino-acid sequence, 152 residues long: Large ribosomal subunit protein uL15 (152 aa).

Positions 1-54 are disordered; sequence MGLKLNELSPGVGAKKTAHRKGRGIGSGLGKTGGRGVKGQKSRSGSGVRRGFEG. The segment covering 24-37 has biased composition (gly residues); it reads GIGSGLGKTGGRGV.

Belongs to the universal ribosomal protein uL15 family. Part of the 50S ribosomal subunit.

Functionally, binds to the 23S rRNA. This is Large ribosomal subunit protein uL15 from Psychrobacter sp. (strain PRwf-1).